We begin with the raw amino-acid sequence, 929 residues long: MTELSAADPAFVQAADALAKTYDPAGTESRWQCAWEESGVFHPDPQAAGEPFSVVIPPPNVTGSLHMGHAFNTALIDTIVRFQRLQGKNVLCLPGTDHASIAVQTILEKQLKAEAISRYDLGREAFLERAWAWKEESGGRIVDQLRRLGYSVDWQRQRFTLDEGLSAAVREAFVRLHEQGLIYRGEYLVNWCPASGSAVSDLEVEMKEVDGHLWHLRYPLTGGPAADGTTHLEVATTRPETMLGDVAVAVNPADERYRHLVGQTLILPLLGREIPVIADDHVDQDFGTGCVKVTPAHDPNDFAIGRRHDLPQITVMNKNGSMNGHAGRFEGLDRFEARKAVVAALQEEGLLVKVEPHRHSVPYSDRGKVPVEPLLSTQWFVRMEPLAARCHECLDHGAPRFVPNRWQKVYRDWLTEIRDWCISRQLWWGHRIPAWFVVSETDDQLTDATPYLVARSEEEAWQQARDQFGEAVVIQQDEDVLDTWFSSGLWPFSTMGWPDQESADLECWYPTSTLVTGFDIIFFWVARMTMMAGAFTGRMPFADVYIHGLVRDEQNRKMSKSAGNGIDPLLLIERYGTDALRFALVREVAGAGQDIRLDYDRKSDTSATVEAARNFANKLWNATRFALMNLGGETPASLGEPDPASLQLADRWILSRLARMNRDVVERYDSYRLGEAAKCLYEFAWNDICDWYLELSKRRLHPGEDASGEVLADQCTARQVLAKVLADLLVMLHPLMPHLSEELWHGLTGAPKDTFLALQSWPASNKSFLDDALELSFTELIEAIRVVRNLRAVAGLKPAQTVPVQFITGRPELAALLEQATADITALTRAESVVVATSADLTQRCLAGVSGELQVLLPIDGLVDLDALRGRLEKDLAKAEKEIAGLAGRLANPNFAIKAPPNVVEECQSNLAEAEAQAELARQRLSDLG.

The 'HIGH' region signature appears at 59–69 (PNVTGSLHMGH). The short motif at 557 to 561 (KMSKS) is the 'KMSKS' region element. Lys-560 provides a ligand contact to ATP. Residues 862–929 (LVDLDALRGR…LARQRLSDLG (68 aa)) adopt a coiled-coil conformation.

The protein belongs to the class-I aminoacyl-tRNA synthetase family. ValS type 1 subfamily. Monomer.

The protein localises to the cytoplasm. The catalysed reaction is tRNA(Val) + L-valine + ATP = L-valyl-tRNA(Val) + AMP + diphosphate. Its function is as follows. Catalyzes the attachment of valine to tRNA(Val). As ValRS can inadvertently accommodate and process structurally similar amino acids such as threonine, to avoid such errors, it has a 'posttransfer' editing activity that hydrolyzes mischarged Thr-tRNA(Val) in a tRNA-dependent manner. The chain is Valine--tRNA ligase from Prochlorococcus marinus (strain MIT 9313).